Reading from the N-terminus, the 381-residue chain is MMSNLPLDLVEEILSRVPATSLKRLRSTCKSWNNCYKDQRFTEKHSVIAAKQFLVLMLKDCRVSSVSVNLNEIHNNIAAPSIELKGVVGPQMQISGIFHCDGLLLCTTKDDRLEVWNPCTGQTRRVQHSIHYKTNSEFVLGYVNNNSRHSYKILRYWNFYMSNYRVSEFEIYDFSSDSWRFIDEVNPYCLTEGEVSLKGNTYWLASDEKRDIDLILRFDFSIERYQRLNLPILKSDYETEALSVVREKQLSVLLKRNDTLEREIWVTTNDKIDHTTKNLLWIKFLAIDQRTCYHWSCVSFFIDEEKKMAVFCDGYIGGINETSRRMFYIIGEDKYYRELYVGDSPIRSHRPFVFNYVPSLVQIPQATVIPKRRRRKRKNRN.

The F-box domain occupies 1–45 (MMSNLPLDLVEEILSRVPATSLKRLRSTCKSWNNCYKDQRFTEKH).

This Arabidopsis thaliana (Mouse-ear cress) protein is Putative F-box protein At3g17500.